The chain runs to 185 residues: Ribosome-recycling factor (185 aa).

Belongs to the RRF family.

Its subcellular location is the cytoplasm. In terms of biological role, responsible for the release of ribosomes from messenger RNA at the termination of protein biosynthesis. May increase the efficiency of translation by recycling ribosomes from one round of translation to another. This Clostridium kluyveri (strain NBRC 12016) protein is Ribosome-recycling factor.